Here is a 90-residue protein sequence, read N- to C-terminus: Small ribosomal subunit protein bS20 (90 aa).

This sequence belongs to the bacterial ribosomal protein bS20 family.

In terms of biological role, binds directly to 16S ribosomal RNA. This is Small ribosomal subunit protein bS20 from Roseiflexus sp. (strain RS-1).